Reading from the N-terminus, the 34-residue chain is Photosystem II reaction center protein M (34 aa).

A helical transmembrane segment spans residues 5-25 (ILAFSATALLILFPTALLLIL).

The protein belongs to the PsbM family. In terms of assembly, PSII is composed of 1 copy each of membrane proteins PsbA, PsbB, PsbC, PsbD, PsbE, PsbF, PsbH, PsbI, PsbJ, PsbK, PsbL, PsbM, PsbT, PsbX, PsbY, PsbZ, Psb30/Ycf12, at least 3 peripheral proteins of the oxygen-evolving complex and a large number of cofactors. It forms dimeric complexes.

It is found in the plastid membrane. Its function is as follows. One of the components of the core complex of photosystem II (PSII). PSII is a light-driven water:plastoquinone oxidoreductase that uses light energy to abstract electrons from H(2)O, generating O(2) and a proton gradient subsequently used for ATP formation. It consists of a core antenna complex that captures photons, and an electron transfer chain that converts photonic excitation into a charge separation. This subunit is found at the monomer-monomer interface. The chain is Photosystem II reaction center protein M from Cuscuta gronovii (Common dodder).